A 145-amino-acid chain; its full sequence is D-aminoacyl-tRNA deacylase (145 aa).

The Gly-cisPro motif, important for rejection of L-amino acids signature appears at 137–138 (GP).

It belongs to the DTD family. As to quaternary structure, homodimer.

It is found in the cytoplasm. It catalyses the reaction glycyl-tRNA(Ala) + H2O = tRNA(Ala) + glycine + H(+). The catalysed reaction is a D-aminoacyl-tRNA + H2O = a tRNA + a D-alpha-amino acid + H(+). An aminoacyl-tRNA editing enzyme that deacylates mischarged D-aminoacyl-tRNAs. Also deacylates mischarged glycyl-tRNA(Ala), protecting cells against glycine mischarging by AlaRS. Acts via tRNA-based rather than protein-based catalysis; rejects L-amino acids rather than detecting D-amino acids in the active site. By recycling D-aminoacyl-tRNA to D-amino acids and free tRNA molecules, this enzyme counteracts the toxicity associated with the formation of D-aminoacyl-tRNA entities in vivo and helps enforce protein L-homochirality. The polypeptide is D-aminoacyl-tRNA deacylase (Pseudomonas aeruginosa (strain LESB58)).